Consider the following 198-residue polypeptide: Recombination protein RecR (198 aa).

The C4-type zinc finger occupies Cys57–Cys72. One can recognise a Toprim domain in the interval Ser80–Ser175.

It belongs to the RecR family.

May play a role in DNA repair. It seems to be involved in an RecBC-independent recombinational process of DNA repair. It may act with RecF and RecO. This Staphylococcus epidermidis (strain ATCC 35984 / DSM 28319 / BCRC 17069 / CCUG 31568 / BM 3577 / RP62A) protein is Recombination protein RecR.